A 353-amino-acid polypeptide reads, in one-letter code: 3-dehydroquinate synthase (353 aa).

Residues 60–65 (AGDMNK), 94–98 (GMITD), 118–119 (TT), lysine 131, and lysine 140 each bind NAD(+). The Zn(2+) site is built by glutamate 173, histidine 234, and histidine 253.

Belongs to the sugar phosphate cyclases superfamily. Dehydroquinate synthase family. NAD(+) serves as cofactor. Co(2+) is required as a cofactor. The cofactor is Zn(2+).

Its subcellular location is the cytoplasm. The enzyme catalyses 7-phospho-2-dehydro-3-deoxy-D-arabino-heptonate = 3-dehydroquinate + phosphate. It functions in the pathway metabolic intermediate biosynthesis; chorismate biosynthesis; chorismate from D-erythrose 4-phosphate and phosphoenolpyruvate: step 2/7. In terms of biological role, catalyzes the conversion of 3-deoxy-D-arabino-heptulosonate 7-phosphate (DAHP) to dehydroquinate (DHQ). This chain is 3-dehydroquinate synthase, found in Parabacteroides distasonis (strain ATCC 8503 / DSM 20701 / CIP 104284 / JCM 5825 / NCTC 11152).